Consider the following 477-residue polypeptide: Sporulation-specific protein 77 (477 aa).

The tract at residues 428–452 (SQQRESSNAESESITSSTEEDEEGL) is disordered. The segment covering 432–444 (ESSNAESESITSS) has biased composition (low complexity).

It is found in the cytoplasm. Its function is as follows. Required for spore wall assembly and ascus formation. The sequence is that of Sporulation-specific protein 77 (SPO77) from Saccharomyces cerevisiae (strain ATCC 204508 / S288c) (Baker's yeast).